The sequence spans 261 residues: Tryptophan synthase alpha chain (261 aa).

Active-site proton acceptor residues include Glu-49 and Asp-60.

This sequence belongs to the TrpA family. Tetramer of two alpha and two beta chains.

It carries out the reaction (1S,2R)-1-C-(indol-3-yl)glycerol 3-phosphate + L-serine = D-glyceraldehyde 3-phosphate + L-tryptophan + H2O. Its pathway is amino-acid biosynthesis; L-tryptophan biosynthesis; L-tryptophan from chorismate: step 5/5. In terms of biological role, the alpha subunit is responsible for the aldol cleavage of indoleglycerol phosphate to indole and glyceraldehyde 3-phosphate. In Roseiflexus castenholzii (strain DSM 13941 / HLO8), this protein is Tryptophan synthase alpha chain.